We begin with the raw amino-acid sequence, 220 residues long: Ribose-5-phosphate isomerase A (220 aa).

Substrate is bound by residues 28 to 31 (TGST), 81 to 84 (DGAD), and 94 to 97 (KGGG). Glutamate 103 functions as the Proton acceptor in the catalytic mechanism. Lysine 121 is a binding site for substrate.

This sequence belongs to the ribose 5-phosphate isomerase family. Homodimer.

The enzyme catalyses aldehydo-D-ribose 5-phosphate = D-ribulose 5-phosphate. It participates in carbohydrate degradation; pentose phosphate pathway; D-ribose 5-phosphate from D-ribulose 5-phosphate (non-oxidative stage): step 1/1. Catalyzes the reversible conversion of ribose-5-phosphate to ribulose 5-phosphate. This is Ribose-5-phosphate isomerase A from Leptothrix cholodnii (strain ATCC 51168 / LMG 8142 / SP-6) (Leptothrix discophora (strain SP-6)).